Here is a 304-residue protein sequence, read N- to C-terminus: Putative ankyrin repeat protein R598 (304 aa).

ANK repeat units lie at residues 7 to 36, 77 to 107, 122 to 151, 152 to 181, 183 to 209, 210 to 239, and 265 to 293; these read NIVTDIKNAICKDDLDSFIILMENNPSINL, YISTVLREEVIKNCSVKILKYLFDMGLPVDF, GSNHYIKENPGQDTLSLLRLLIEYGVDVNA, HNYLPLYSAVSSKNFDKVKLLVENGANVLR, ANGNENSFYFKIDSIKYLLDNGVEIDM, NLSRALFLSIKDNSIECIQFYLELGADINK, and FDFTSLNKLAGNNNERIIDVLINEANVDI.

The polypeptide is Putative ankyrin repeat protein R598 (Acanthamoeba polyphaga (Amoeba)).